Here is a 163-residue protein sequence, read N- to C-terminus: MMREILTSRFFPSLFKKRLDFSNRVVLGLGSNLKNPLKILKNCFLYFKNHSKIGKIFSSPIYINPPFGYTKQPNFYNATIILKTSLSLRHFFALVFYIERRFGRQRKRDFKDAPRTLDIDIIAFNQVILRQNDLALPHPKWSERDSVLVPLALQQILFKKGEW.

It belongs to the HPPK family.

The enzyme catalyses 6-hydroxymethyl-7,8-dihydropterin + ATP = (7,8-dihydropterin-6-yl)methyl diphosphate + AMP + H(+). It participates in cofactor biosynthesis; tetrahydrofolate biosynthesis; 2-amino-4-hydroxy-6-hydroxymethyl-7,8-dihydropteridine diphosphate from 7,8-dihydroneopterin triphosphate: step 4/4. In terms of biological role, catalyzes the transfer of pyrophosphate from adenosine triphosphate (ATP) to 6-hydroxymethyl-7,8-dihydropterin, an enzymatic step in folate biosynthesis pathway. The chain is 2-amino-4-hydroxy-6-hydroxymethyldihydropteridine pyrophosphokinase (folK) from Helicobacter pylori (strain ATCC 700392 / 26695) (Campylobacter pylori).